The following is a 693-amino-acid chain: CREB-regulated transcription coactivator 2 (693 aa).

Positions 1–20 are enriched in polar residues; the sequence is MATSGANGPGSATASASNPR. The disordered stretch occupies residues 1-30; it reads MATSGANGPGSATASASNPRKFSEKIALQK. Ala2 carries the N-acetylalanine modification. Position 51 is an asymmetric dimethylarginine; by PRMT6 (Arg51). Ser70, Ser86, and Ser90 each carry phosphoserine. Arg99, Arg120, and Arg123 each carry asymmetric dimethylarginine; by PRMT6. Ser136 carries the post-translational modification Phosphoserine. Arg161 and Arg168 each carry asymmetric dimethylarginine; by PRMT6. Thr169 bears the Phosphothreonine mark. Ser171 bears the Phosphoserine; by AMPK, MARK2, SIK1 and SIK2 mark. Thr192 is modified (phosphothreonine). A Glycyl lysine isopeptide (Lys-Gly) (interchain with G-Cter in SUMO2) cross-link involves residue Lys234. The short motif at 271-287 is the Nuclear export signal element; sequence TGGSLPDLTNLHFPPPL. Ser274 bears the Phosphoserine; by MARK2 mark. 2 disordered regions span residues 282-306 and 328-554; these read HFPP…GGNS and GYDA…MSDF. Phosphoserine occurs at positions 306, 368, 393, 433, and 456. 2 stretches are compositionally biased toward low complexity: residues 331-378 and 386-415; these read APGL…SSLA and SLGH…GAPS. Over residues 447 to 468 the composition is skewed to polar residues; that stretch reads SQQQLPKQFSPTMSPTLSSITQ. Position 488 is a phosphotyrosine (Tyr488). Residues Ser489, Ser490, and Ser492 each carry the phosphoserine modification. A compositionally biased stretch (polar residues) spans 498–507; it reads QPHTPKSLQQ. The residue at position 501 (Thr501) is a Phosphothreonine. The segment covering 509-529 has biased composition (low complexity); it reads GLPSQSCSVQSSGGQPPGRQS. Ser613, Ser623, and Ser624 each carry phosphoserine.

It belongs to the TORC family. In terms of assembly, binds, as a tetramer, through its N-terminal region, with the bZIP domain of CREB1. 'Arg-314' in the bZIP domain of CREB1 is essential for this interaction. Interaction, via its C-terminal, with TAF4, enhances recruitment of TAF4 to CREB1. Interacts with SIK2. Interacts with 14-3-3 proteins, YWHAB and YWHAG. Interacts (probably when phosphorylated at Ser-171) with YWHAE. Interacts with calmodulin-dependent catalytic subunit PPP3CA/calcineurin A. Interaction with COP1 mediates nuclear export and degradation of CRTC2. (Microbial infection) Interaction with the human T-cell leukemia virus type 1 (HTLV-1) Tax protein is essential for optimal transcription activation by Tax. Post-translationally, phosphorylation/dephosphorylation states of Ser-171 are required for regulating transduction of CREB activity. CRTCs/TORCs are inactive when phosphorylated, and active when dephosphorylated at this site. This primary site of phosphorylation, is regulated by cAMP and calcium levels and is dependent on the phosphorylation of SIKs (SIK1 and SIK2) by LKB1. Following adenylyl cyclase activation, dephosphorylated at Ser-171 by PPP3CA/calcineurin A resulting in CRTC2 dissociation from 14-3-3 proteins and PPP3CA. Both insulin and AMPK increase this phosphorylation of CRTC2 while glucagon suppresses it. Phosphorylation at Ser-274 by MARK2 is induced under low glucose conditions and dephosphorylated in response to glucose influx. Phosphorylation at Ser-274 promotes interaction with 14-3-3 proteins and translocation to the cytoplasm. Asymmetric dimethylation of arginine resisues by PRMT6 enhances the association of CRTC2 with CREB on the promoters of gluconeogenic genes. Most abundantly expressed in the thymus. Present in both B and T-lymphocytes. Highly expressed in HEK293T cells and in insulinomas. High levels also in spleen, ovary, muscle and lung, with highest levels in muscle. Lower levels found in brain, colon, heart, kidney, prostate, small intestine and stomach. Weak expression in liver and pancreas.

The protein localises to the cytoplasm. Its subcellular location is the nucleus. Functionally, transcriptional coactivator for CREB1 which activates transcription through both consensus and variant cAMP response element (CRE) sites. Acts as a coactivator, in the SIK/TORC signaling pathway, being active when dephosphorylated and acts independently of CREB1 'Ser-133' phosphorylation. Enhances the interaction of CREB1 with TAF4. Regulates gluconeogenesis as a component of the LKB1/AMPK/TORC2 signaling pathway. Regulates the expression of specific genes such as the steroidogenic gene, StAR. Potent coactivator of PPARGC1A and inducer of mitochondrial biogenesis in muscle cells. Also coactivator for TAX activation of the human T-cell leukemia virus type 1 (HTLV-1) long terminal repeats (LTR). This is CREB-regulated transcription coactivator 2 (CRTC2) from Homo sapiens (Human).